The primary structure comprises 470 residues: Ribulose bisphosphate carboxylase large chain (470 aa).

Substrate-binding residues include N115 and T165. K167 acts as the Proton acceptor in catalysis. K169 contacts substrate. The Mg(2+) site is built by K193, D195, and E196. The residue at position 193 (K193) is an N6-carboxylysine. Residue H286 is the Proton acceptor of the active site. Positions 287, 319, and 371 each coordinate substrate.

Belongs to the RuBisCO large chain family. Type I subfamily. As to quaternary structure, heterohexadecamer of 8 large chains and 8 small chains. It depends on Mg(2+) as a cofactor.

Its subcellular location is the carboxysome. The enzyme catalyses 2 (2R)-3-phosphoglycerate + 2 H(+) = D-ribulose 1,5-bisphosphate + CO2 + H2O. It catalyses the reaction D-ribulose 1,5-bisphosphate + O2 = 2-phosphoglycolate + (2R)-3-phosphoglycerate + 2 H(+). Functionally, ruBisCO catalyzes two reactions: the carboxylation of D-ribulose 1,5-bisphosphate, the primary event in carbon dioxide fixation, as well as the oxidative fragmentation of the pentose substrate in the photorespiration process. Both reactions occur simultaneously and in competition at the same active site. The chain is Ribulose bisphosphate carboxylase large chain from Prochlorococcus marinus (strain MIT 9303).